A 133-amino-acid chain; its full sequence is Small ribosomal subunit protein uS8c (133 aa).

Belongs to the universal ribosomal protein uS8 family. Part of the 30S ribosomal subunit.

It is found in the plastid. It localises to the chloroplast. Functionally, one of the primary rRNA binding proteins, it binds directly to 16S rRNA central domain where it helps coordinate assembly of the platform of the 30S subunit. This Cyanidium caldarium (Red alga) protein is Small ribosomal subunit protein uS8c (rps8).